The sequence spans 754 residues: MPDTLPQPPEVDRDLALDHGLTDDEYDEILDRLGRTPTFTELGIYSVMWSEHCSYKNSTALLKTLPTEGDQLLAEVGEENAGLVDVGDGKAVAFKIESHNHPSAVEPYEGAATGVGGIHRDIFTMGARPICALDSLRFGSLEESRVRYLFDGVVRGIGDYGNSFGVPTVGGEVYFEDAYEGNPLVNAMSVGVVDTDQTARAAAETPGHHVILVGAATGRDGIHGATFASAEIDEDSEEDRPSVQVGDPFTEKLLLEATLEAIREGVVGSIQDMGAAGITSSAFEMSASGGTGMDLHLDRVPTRETGMTPYEIMLSESQERMLVVCEPGDEEALAEIYGKWDLNAQRIGTVTDTGRVRAYWDDEEVATLDPAHVAGDDVPVYERDTERPAYLEETRAFNTDDVPDLAPAEVEDTLTTLLGSPNIASKRWVHEQYDTMVRTNTVVGPGASDAAVVRLKGTGKGLAVKTDCNGRYVYLNPRRGAQIAVAEAARNVTCAGGTPVALTNCCNFGNPHNPEAYWAFAKAVEGMGDAGRALDTPVTGGNVSLYNEHPEGAIFPTPTIGMLGVVDDIDTQPTAAALQNEGDALFLLTPRDWCHPERTDGSEYLSTVHDRTAGDAPHLDLDEEVAVQSATQALIREGLVQHAHDVSDGGLAVCLAESVIHSDGLGLEATLPAADRLDAALFGEAQSRVVVSVRPDDALALDAALTDHNGVRARRLGAVTTGPLRLTVGDEPVLDASPAALTAPYEAALPDAVT.

Residue His52 is part of the active site. ATP-binding residues include Tyr55 and Lys95. Glu97 provides a ligand contact to Mg(2+). Substrate contacts are provided by residues 98-101 (SHNH) and Arg120. Residue His99 is the Proton acceptor of the active site. A Mg(2+)-binding site is contributed by Asp121. Gln244 contacts substrate. Residue Asp272 coordinates Mg(2+). 316–318 (ESQ) is a substrate binding site. 2 residues coordinate ATP: Asn504 and Gly541. A Mg(2+)-binding site is contributed by Asn542. Ser544 provides a ligand contact to substrate.

This sequence belongs to the FGAMS family. In terms of assembly, monomer. Part of the FGAM synthase complex composed of 1 PurL, 1 PurQ and 2 PurS subunits.

It localises to the cytoplasm. It carries out the reaction N(2)-formyl-N(1)-(5-phospho-beta-D-ribosyl)glycinamide + L-glutamine + ATP + H2O = 2-formamido-N(1)-(5-O-phospho-beta-D-ribosyl)acetamidine + L-glutamate + ADP + phosphate + H(+). It participates in purine metabolism; IMP biosynthesis via de novo pathway; 5-amino-1-(5-phospho-D-ribosyl)imidazole from N(2)-formyl-N(1)-(5-phospho-D-ribosyl)glycinamide: step 1/2. Part of the phosphoribosylformylglycinamidine synthase complex involved in the purines biosynthetic pathway. Catalyzes the ATP-dependent conversion of formylglycinamide ribonucleotide (FGAR) and glutamine to yield formylglycinamidine ribonucleotide (FGAM) and glutamate. The FGAM synthase complex is composed of three subunits. PurQ produces an ammonia molecule by converting glutamine to glutamate. PurL transfers the ammonia molecule to FGAR to form FGAM in an ATP-dependent manner. PurS interacts with PurQ and PurL and is thought to assist in the transfer of the ammonia molecule from PurQ to PurL. In Salinibacter ruber (strain DSM 13855 / M31), this protein is Phosphoribosylformylglycinamidine synthase subunit PurL.